The primary structure comprises 358 residues: CCAAT/enhancer-binding protein alpha (358 aa).

Positions 1-55 are disordered; that stretch reads MESADFYEAEPRPPMSSHLQSPPHAPSNAAFGFPRGAGPAPPPAPPAAPEPLGGI. The interval 1–70 is required to repress E2F1:TFDP1-mediated transcription, to inhibit cell cycle and to induce adipocyte differentiation; it reads MESADFYEAE…SIDISAYIDP (70 aa). The segment covering 29–38 has biased composition (low complexity); sequence AAFGFPRGAG. A compositionally biased stretch (pro residues) spans 39-49; the sequence is PAPPPAPPAAP. The segment at 54–72 is required for interaction with TRIB1; that stretch reads GICEHETSIDISAYIDPAA. Residues 126–200 form a required to induce adipocyte differentiation region; that stretch reads PPGYGCAAAG…HASPAHLAAP (75 aa). Lys159 is modified (N6-acetyllysine; alternate). Lys159 participates in a covalent cross-link: Glycyl lysine isopeptide (Lys-Gly) (interchain with G-Cter in SUMO); alternate. Lys159 participates in a covalent cross-link: Glycyl lysine isopeptide (Lys-Gly) (interchain with G-Cter in SUMO2); alternate. Disordered regions lie at residues 176-195 and 213-310; these read LFPY…ASPA and TMHL…NVET. A compositionally biased stretch (pro residues) spans 179–191; it reads YQPPPPPPPPHPH. The required to functionally cooperate with SREBF1 in promoter activation stretch occupies residues 180–194; that stretch reads QPPPPPPPPHPHASP. Residue Ser193 is modified to Phosphoserine. Pro residues predominate over residues 220 to 234; that stretch reads HPTPPPTPVPSPHPA. 2 positions are modified to phosphothreonine; by GSK3: Thr222 and Thr226. Ser230 carries the post-translational modification Phosphoserine; by GSK3. Residues 240-358 form an interaction with FOXO1 region; sequence AGLPGPGGSL…SLVKAMGNCA (119 aa). Gly residues predominate over residues 261–271; the sequence is TGGGGGGGAGA. Residues 276 to 292 are compositionally biased toward basic and acidic residues; sequence KSVDKNSNEYRVRRERN. The bZIP domain occupies 282 to 345; the sequence is SNEYRVRRER…DTLRGIFRQL (64 aa). The DNA-binding element occupies 285 to 300; it reads YRVRRERNNIAVRKSR. The interval 286 to 313 is basic motif; that stretch reads RVRRERNNIAVRKSRDKAKQRNVETQQK. The tract at residues 317-345 is leucine-zipper; it reads LTSDNDRLRKRVEQLSRELDTLRGIFRQL.

The protein belongs to the bZIP family. C/EBP subfamily. In terms of assembly, binds DNA as a homodimer and as a heterodimer. Can form stable heterodimers with CEBPB, CEBPD, CEBPE and CEBPG. Can form stable homodimers (also isoform 2 and isoform 3 dimers) and heterodimers with CEBPB (with isoform 2 and isoform 3) and CEBPG. Interacts with PRDM16. Interacts with UBN1. Interacts with ZNF638; this interaction increases transcriptional activation. Interacts with the complex TFDP2:E2F1; the interaction prevents CEBPA binding to target gene promoters and represses its transcriptional activity. Interacts with RB1. Interacts (when phosphorylated at Ser-193) with CDK2, CDK4, E2F4 and SMARCA2. Interacts with SREBPF1. Interacts with FOXO1 (via the Fork-head domain); the interaction increases when FOXO1 is deacetylated. Interacts with SIX1. Interacts (via recognition sequence) with TRIB1. As to quaternary structure, interacts with TAF1A and UBTF. Interacts with NPM1. Sumoylated, sumoylation blocks the inhibitory effect on cell proliferation by disrupting the interaction with SMARCA2. In terms of processing, phosphorylation at Ser-193 is required for interaction with CDK2, CDK4 and SWI/SNF complex leading to cell cycle inhibition. Dephosphorylated at Ser-193 by protein phosphatase 2A (PP2A) through PI3K/AKT signaling pathway regulation. Phosphorylation at Thr-222 and Thr-226 by GSK3 is constitutive in adipose tissue and lung. In liver, both Thr-222 and Thr-226 are phosphorylated only during feeding but not during fasting. Phosphorylation of the GSK3 consensus sites selectively decreases transactivation activity on IRE-controlled promoters. Post-translationally, ubiquitinated by COP1 upon interaction with TRIB1. In terms of tissue distribution, isoform 2 and isoform 3 are expressed in liver (at protein level).

The protein localises to the nucleus. It is found in the nucleolus. Functionally, transcription factor that coordinates proliferation arrest and the differentiation of myeloid progenitors, adipocytes, hepatocytes, and cells of the lung and the placenta. Binds directly to the consensus DNA sequence 5'-T[TG]NNGNAA[TG]-3' acting as an activator on distinct target genes. During early embryogenesis, plays essential and redundant functions with CEBPB. Essential for the transition from common myeloid progenitors (CMP) to granulocyte/monocyte progenitors (GMP). Critical for the proper development of the liver and the lung. Necessary for terminal adipocyte differentiation, is required for postnatal maintenance of systemic energy homeostasis and lipid storage. To regulate these different processes at the proper moment and tissue, interplays with other transcription factors and modulators. Down-regulates the expression of genes that maintain cells in an undifferentiated and proliferative state through E2F1 repression, which is critical for its ability to induce adipocyte and granulocyte terminal differentiation. Reciprocally E2F1 blocks adipocyte differentiation by binding to specific promoters and repressing CEBPA binding to its target gene promoters. Proliferation arrest also depends on a functional binding to SWI/SNF complex. In liver, regulates gluconeogenesis and lipogenesis through different mechanisms. To regulate gluconeogenesis, functionally cooperates with FOXO1 binding to IRE-controlled promoters and regulating the expression of target genes such as PCK1 or G6PC1. To modulate lipogenesis, interacts and transcriptionally synergizes with SREBF1 in promoter activation of specific lipogenic target genes such as ACAS2. In adipose tissue, seems to act as FOXO1 coactivator accessing to ADIPOQ promoter through FOXO1 binding sites. In terms of biological role, can act as dominant-negative. Binds DNA and have transctivation activity, even if much less efficiently than isoform 2. Does not inhibit cell proliferation. Directly and specifically enhances ribosomal DNA transcription interacting with RNA polymerase I-specific cofactors and inducing histone acetylation. In Rattus norvegicus (Rat), this protein is CCAAT/enhancer-binding protein alpha.